The primary structure comprises 55 residues: MAKATDVRPKITLACVECKERNYITRKNRRNDPDRIELKKFCPREGRHTIHRETR.

Belongs to the bacterial ribosomal protein bL33 family.

This is Large ribosomal subunit protein bL33B from Salinispora tropica (strain ATCC BAA-916 / DSM 44818 / JCM 13857 / NBRC 105044 / CNB-440).